The sequence spans 419 residues: 2-amino-3-ketobutyrate coenzyme A ligase, mitochondrial (419 aa).

The transit peptide at 1–21 directs the protein to the mitochondrion; the sequence is MWPGNAWRAALFWVPRGRRAQ. N6-acetyllysine; alternate is present on lysine 45. Lysine 45 is subject to N6-succinyllysine; alternate. Residue 134–135 participates in pyridoxal 5'-phosphate binding; that stretch reads CY. Histidine 159 contributes to the substrate binding site. Lysine 187 is subject to N6-acetyllysine; alternate. Residue lysine 187 is modified to N6-succinyllysine; alternate. Residues serine 206, 262-265, and 295-296 each bind pyridoxal 5'-phosphate; these read TLGK and SN. Lysine 265 carries the post-translational modification N6-(pyridoxal phosphate)lysine. An N6-succinyllysine mark is found at lysine 326 and lysine 368. Position 383 is an N6-acetyllysine; alternate (lysine 383). Lysine 383 is modified (N6-succinyllysine; alternate). Residue arginine 389 coordinates substrate.

The protein belongs to the class-II pyridoxal-phosphate-dependent aminotransferase family. It depends on pyridoxal 5'-phosphate as a cofactor. In terms of tissue distribution, strongly expressed in heart, brain, liver and pancreas. Also found in lung.

The protein localises to the mitochondrion. Its subcellular location is the nucleus. The enzyme catalyses glycine + acetyl-CoA = (2S)-2-amino-3-oxobutanoate + CoA. Functionally, pyridoxal phosphate (PLP) dependent enzyme, which catalyzes the cleavage of 2-amino-3-oxobutanoate to glycine and acetyl-CoA. This chain is 2-amino-3-ketobutyrate coenzyme A ligase, mitochondrial, found in Homo sapiens (Human).